Here is a 345-residue protein sequence, read N- to C-terminus: C5a anaphylatoxin chemotactic receptor 1 (345 aa).

The Extracellular segment spans residues 1-32 (MMVTVSYDYDYNSTFLPDGFVDNYVERLSFGD). 2 positions are modified to sulfotyrosine: tyrosine 9 and tyrosine 11. Residue asparagine 12 is glycosylated (N-linked (GlcNAc...) asparagine). The chain crosses the membrane as a helical span at residues 33-59 (LVAVVIMVVVFLVGVPGNALVVWVTAC). Residues 60-64 (EARRH) lie on the Cytoplasmic side of the membrane. A helical transmembrane segment spans residues 65–88 (INAIWFLNLAAADLLSCLALPILL). Residues 89–105 (VSTVHLNHWYFGDTACK) lie on the Extracellular side of the membrane. The cysteines at positions 104 and 183 are disulfide-linked. A helical membrane pass occupies residues 106 to 127 (VLPSLILLNMYTSILLLATISA). At 128-148 (DRLLLVLSPIWCQRFRGGCLA) the chain is on the cytoplasmic side. A helical transmembrane segment spans residues 149–169 (WTACGLAWVLALLLSSPSFLY). Residues 170–195 (RRTHNEHFSFKVYCVTDYGRDISKER) are Extracellular-facing. The helical transmembrane segment at 196–221 (AVALVRLLVGFIVPLITLTACYTFLL) threads the bilayer. Topologically, residues 222-237 (LRTWSRKATRSAKTVK) are cytoplasmic. The chain crosses the membrane as a helical span at residues 238–260 (VVVAVVSSFFVFWLPYQVTGILL). At 261–277 (AWHSPNSATYRNTKALD) the chain is on the extracellular side. Residues 278–298 (AVCVAFAYINCCINPIIYVVA) form a helical membrane-spanning segment. Residues 299–345 (GHGFQGRLLKSLPSVLRNVLTEESLDKRHQSFARSTVDTMPQKSESV) lie on the Cytoplasmic side of the membrane. Phosphoserine occurs at positions 309, 312, 322, 329, and 333.

The protein belongs to the G-protein coupled receptor 1 family. In terms of assembly, homodimer. May also form higher-order oligomers. Interacts (when phosphorylated) with ARRB1 and ARRB2; the interaction is associated with internalization of C5aR. Sulfation plays a critical role in the association of C5aR with C5a, but no significant role in the ability of the receptor to transduce a signal and mobilize calcium in response to a small peptide agonist. Post-translationally, phosphorylated on serine residues in response to C5a binding, resulting in internalization of the receptor and short-term desensitization to C5a. In terms of tissue distribution, expressed strongly in macrophages and spleen. Weak expression detected in lung, liver, brain, heart and kidney.

It localises to the cell membrane. Its subcellular location is the cytoplasmic vesicle. Its function is as follows. Receptor for the chemotactic and inflammatory peptide anaphylatoxin C5a. The ligand interacts with at least two sites on the receptor: a high-affinity site on the extracellular N-terminus, and a second site in the transmembrane region which activates downstream signaling events. Receptor activation stimulates chemotaxis, granule enzyme release, intracellular calcium release and superoxide anion production. The polypeptide is C5a anaphylatoxin chemotactic receptor 1 (C5AR1) (Cavia porcellus (Guinea pig)).